Consider the following 179-residue polypeptide: MDKVEVSELHVRIGQVKIGSPGQVLTAILGSCVGIGFFFPQRQIYGLAHCLLSQSSSQPVASSAAQTGRTREDGQLVGNGRHVDKAIESLLKMMDIQDEERRQLRVVLAGGANMSMPFDTPPSQLVGSVNAKFARQAIRSAGLRLLGDDLGGLNGRRISINCDSGEYDIQQIPRLGGTV.

It belongs to the CheD family.

The catalysed reaction is L-glutaminyl-[protein] + H2O = L-glutamyl-[protein] + NH4(+). In terms of biological role, probably deamidates glutamine residues to glutamate on methyl-accepting chemotaxis receptors (MCPs), playing an important role in chemotaxis. In Ruegeria sp. (strain TM1040) (Silicibacter sp.), this protein is Probable chemoreceptor glutamine deamidase CheD 2.